The sequence spans 220 residues: Vesicle-associated membrane protein 7 (220 aa).

Residue A2 is modified to N-acetylalanine; partial. Residues 2-188 lie on the Cytoplasmic side of the membrane; it reads AILFAVVARG…ARAMCMKNLK (187 aa). One can recognise a Longin domain in the interval 7–110; it reads VVARGTTILA…AMNSEFSSVL (104 aa). The v-SNARE coiled-coil homology domain occupies 125-185; sequence KVMETQAQVD…RNLARAMCMK (61 aa). Phosphoserine is present on residues S167 and S168. The helical; Anchor for type IV membrane protein transmembrane segment at 189–209 threads the bilayer; it reads LTIIIIIVSIVFIYIIVSPLC. Residues 210–220 are Vesicular-facing; the sequence is GGFTWPSCVKK.

The protein belongs to the synaptobrevin family. As to quaternary structure, component of the SNARE complex composed of STX4, SNAP23 and VAMP7 that binds SYT7 during lysosomal exocytosis. Component of the SNARE complex composed of STX7, STX8, VAMP7 and VTI1B that is required for heterotypic fusion of late endosomes with lysosomes. May interact with STX17. Interacts with PICALM. Interacts with RAB21. Detected in all tissues tested.

Its subcellular location is the cytoplasmic vesicle. It localises to the secretory vesicle membrane. The protein localises to the golgi apparatus. The protein resides in the trans-Golgi network membrane. It is found in the late endosome membrane. Its subcellular location is the lysosome membrane. It localises to the endoplasmic reticulum membrane. The protein localises to the phagosome membrane. The protein resides in the synapse. It is found in the synaptosome. Functionally, involved in the targeting and/or fusion of transport vesicles to their target membrane during transport of proteins from the early endosome to the lysosome. Required for heterotypic fusion of late endosomes with lysosomes and homotypic lysosomal fusion. Required for calcium regulated lysosomal exocytosis. Involved in the export of chylomicrons from the endoplasmic reticulum to the cis Golgi. Required for exocytosis of mediators during eosinophil and neutrophil degranulation, and target cell killing by natural killer cells. Required for focal exocytosis of late endocytic vesicles during phagosome formation. The protein is Vesicle-associated membrane protein 7 (VAMP7) of Homo sapiens (Human).